A 111-amino-acid chain; its full sequence is Large ribosomal subunit protein uL24 (111 aa).

This sequence belongs to the universal ribosomal protein uL24 family. As to quaternary structure, part of the 50S ribosomal subunit.

Its function is as follows. One of two assembly initiator proteins, it binds directly to the 5'-end of the 23S rRNA, where it nucleates assembly of the 50S subunit. In terms of biological role, one of the proteins that surrounds the polypeptide exit tunnel on the outside of the subunit. In Heliobacterium modesticaldum (strain ATCC 51547 / Ice1), this protein is Large ribosomal subunit protein uL24.